The sequence spans 652 residues: UvrABC system protein C (652 aa).

One can recognise a GIY-YIG domain in the interval 37–116 (KSSGCYLFKD…IKTNKPYFNI (80 aa)). In terms of domain architecture, UVR spans 226 to 261 (DDLEIFLQKKMLQFSNDLDYENAAKIRDQISGLKLL).

The protein belongs to the UvrC family. As to quaternary structure, interacts with UvrB in an incision complex.

It is found in the cytoplasm. The UvrABC repair system catalyzes the recognition and processing of DNA lesions. UvrC both incises the 5' and 3' sides of the lesion. The N-terminal half is responsible for the 3' incision and the C-terminal half is responsible for the 5' incision. The protein is UvrABC system protein C of Prochlorococcus marinus (strain MIT 9312).